The primary structure comprises 208 residues: Imidazoleglycerol-phosphate dehydratase (208 aa).

It belongs to the imidazoleglycerol-phosphate dehydratase family.

The protein localises to the cytoplasm. The enzyme catalyses D-erythro-1-(imidazol-4-yl)glycerol 3-phosphate = 3-(imidazol-4-yl)-2-oxopropyl phosphate + H2O. Its pathway is amino-acid biosynthesis; L-histidine biosynthesis; L-histidine from 5-phospho-alpha-D-ribose 1-diphosphate: step 6/9. The sequence is that of Imidazoleglycerol-phosphate dehydratase from Arthrobacter sp. (strain FB24).